The chain runs to 244 residues: Sugar fermentation stimulation protein homolog (244 aa).

The protein belongs to the SfsA family.

This is Sugar fermentation stimulation protein homolog from Dinoroseobacter shibae (strain DSM 16493 / NCIMB 14021 / DFL 12).